We begin with the raw amino-acid sequence, 160 residues long: Ribosomal RNA large subunit methyltransferase H (160 aa).

Residues L76, G108, and 127-132 (LGKLTW) contribute to the S-adenosyl-L-methionine site.

The protein belongs to the RNA methyltransferase RlmH family. Homodimer.

It localises to the cytoplasm. The catalysed reaction is pseudouridine(1915) in 23S rRNA + S-adenosyl-L-methionine = N(3)-methylpseudouridine(1915) in 23S rRNA + S-adenosyl-L-homocysteine + H(+). Its function is as follows. Specifically methylates the pseudouridine at position 1915 (m3Psi1915) in 23S rRNA. In Agrobacterium fabrum (strain C58 / ATCC 33970) (Agrobacterium tumefaciens (strain C58)), this protein is Ribosomal RNA large subunit methyltransferase H.